A 520-amino-acid chain; its full sequence is Transactivator/viroplasmin protein (520 aa).

The segment at 486–520 (VQDASADSGPKDGPPPTRSIVEKEDVPTTSSKQVD) is disordered.

This sequence belongs to the caulimoviridae viroplasmin family.

It localises to the host cytoplasm. In terms of biological role, enhances the ribosomal termination-reinitiation event leading to the translation of major open reading frames on the polycistronic viral RNAs. The polypeptide is Transactivator/viroplasmin protein (Cauliflower mosaic virus (strain BBC) (CaMV)).